We begin with the raw amino-acid sequence, 89 residues long: Small ribosomal subunit protein uS15 (89 aa).

Belongs to the universal ribosomal protein uS15 family. As to quaternary structure, part of the 30S ribosomal subunit. Forms a bridge to the 50S subunit in the 70S ribosome, contacting the 23S rRNA.

One of the primary rRNA binding proteins, it binds directly to 16S rRNA where it helps nucleate assembly of the platform of the 30S subunit by binding and bridging several RNA helices of the 16S rRNA. In terms of biological role, forms an intersubunit bridge (bridge B4) with the 23S rRNA of the 50S subunit in the ribosome. The sequence is that of Small ribosomal subunit protein uS15 from Listeria innocua serovar 6a (strain ATCC BAA-680 / CLIP 11262).